A 152-amino-acid chain; its full sequence is 6,7-dimethyl-8-ribityllumazine synthase (152 aa).

5-amino-6-(D-ribitylamino)uracil contacts are provided by residues F24, 56–58, and 80–82; these read SFE and VVV. Residue 85–86 participates in (2S)-2-hydroxy-3-oxobutyl phosphate binding; it reads ET. H88 (proton donor) is an active-site residue. Residue F113 coordinates 5-amino-6-(D-ribitylamino)uracil. R127 contributes to the (2S)-2-hydroxy-3-oxobutyl phosphate binding site.

The protein belongs to the DMRL synthase family.

The catalysed reaction is (2S)-2-hydroxy-3-oxobutyl phosphate + 5-amino-6-(D-ribitylamino)uracil = 6,7-dimethyl-8-(1-D-ribityl)lumazine + phosphate + 2 H2O + H(+). It functions in the pathway cofactor biosynthesis; riboflavin biosynthesis; riboflavin from 2-hydroxy-3-oxobutyl phosphate and 5-amino-6-(D-ribitylamino)uracil: step 1/2. In terms of biological role, catalyzes the formation of 6,7-dimethyl-8-ribityllumazine by condensation of 5-amino-6-(D-ribitylamino)uracil with 3,4-dihydroxy-2-butanone 4-phosphate. This is the penultimate step in the biosynthesis of riboflavin. The sequence is that of 6,7-dimethyl-8-ribityllumazine synthase from Thermococcus onnurineus (strain NA1).